A 305-amino-acid chain; its full sequence is Tetraspanin-12 (305 aa).

The Cytoplasmic segment spans residues 1-12 (MAREDSVRCLRC). Residues cysteine 9 and cysteine 12 are each lipidated (S-palmitoyl cysteine). A helical membrane pass occupies residues 13–33 (LLYALNLLFWLMSISVLGVSA). Over 34 to 59 (WIRDYLNNVLTLTAETRVEEAVILTY) the chain is Extracellular. A helical transmembrane segment spans residues 60–80 (FPVVHPVMIAVCCFLILVGML). Residues 81–89 (GYCGTVKRN) are Cytoplasmic-facing. The S-palmitoyl cysteine moiety is linked to residue cysteine 83. Residues 90-110 (LLLLVWYFGSLLVIFCVELAC) traverse the membrane as a helical segment. Topologically, residues 111–224 (GVWTYEQEIT…RGTKQLQVLR (114 aa)) are extracellular. The helical transmembrane segment at 225–245 (FLGISIGVTQILAMILTITLL) threads the bilayer. Residues 246–305 (WALYYDRRDPGADQIMSLKNDTSQQLSCHSVELLKPSLTGIFEHTSMANSFNTHFEMEEL) are Cytoplasmic-facing.

This sequence belongs to the tetraspanin (TM4SF) family. Component of a complex, at least composed of TSPAN12, FZD4 and norrin (NDP). Post-translationally, palmitoylated; required for interaction with ADAM10. The precise position of palmitoylated residues is unclear and occurs either on Cys-9, Cys-12 and/or Cys-83.

The protein resides in the cell membrane. In terms of biological role, regulator of cell surface receptor signal transduction. Plays a central role in retinal vascularization by regulating norrin (NDP) signal transduction. Acts in concert with norrin (NDP) to promote FZD4 multimerization and subsequent activation of FZD4, leading to promote accumulation of beta-catenin (CTNNB1) and stimulate LEF/TCF-mediated transcriptional programs. Suprisingly, it only activates the norrin (NDP)-dependent activation of FZD4, while it does not activate the Wnt-dependent activation of FZD4, suggesting the existence of a Wnt-independent signaling that also promote accumulation the beta-catenin (CTNNB1). The protein is Tetraspanin-12 (TSPAN12) of Gallus gallus (Chicken).